The chain runs to 152 residues: Pleckstrin homology-like domain family A member 2 (152 aa).

A phosphoserine mark is found at serine 3 and serine 42. The 93-residue stretch at 7–99 (VLREGELEKR…WNAAIALALI (93 aa)) folds into the PH domain. The segment at 112–152 (SRQERTAPAAPAEDAVAAAAAAPSEPSEPSRPSPQPKPRTP) is disordered. A compositionally biased stretch (low complexity) spans 118–138 (APAAPAEDAVAAAAAAPSEPS). Pro residues predominate over residues 140–152 (PSRPSPQPKPRTP). 2 positions are modified to phosphoserine: serine 141 and serine 144. A Phosphothreonine modification is found at threonine 151.

This sequence belongs to the PHLDA2 family. As to expression, expressed in placenta and adult prostate gland. In placenta, it is present in all cells of the villous cytotrophoblast. The protein is absent in cells from hydatidiform moles. Hydatidiform mole is a gestation characterized by abnormal development of both fetus and trophoblast. The majority of hydatidiform moles are associated with an excess of paternal to maternal genomes and are likely to result from the abnormal expression of imprinted genes (at protein level). Expressed at low levels in adult liver and lung, and fetal liver. Expressed in adult brain and neuroblastoma, medullablastoma and glioblastoma cell lines.

It is found in the cytoplasm. The protein localises to the membrane. Its function is as follows. Plays a role in regulating placenta growth. May act via its PH domain that competes with other PH domain-containing proteins, thereby preventing their binding to membrane lipids. The polypeptide is Pleckstrin homology-like domain family A member 2 (PHLDA2) (Homo sapiens (Human)).